Reading from the N-terminus, the 375-residue chain is MKNNSHNAKQAPSKAAKPKHDNDVNKAKPKRVKKKAAVKAKLSAEKSDVDFIKIAKSGLHESNAHRGRYDFKKLIASEPALASFVIKNPKGEDSINFSDPNAVKMLNKALLAAYYNIDFWDIPEHYLCPPIPGRADYIHRVAELLDGEVKGKYRHQNVRALDVGVGANCIYPIVGVTQYGWHYTGSDVDPKSIDSAANIVERNVALNGKIELVQQMSESHIYRGVIKPNDRFDVTTCNPPFHRSAEDAAMGSQRKLDNLKANQRKKGVKQQNSPVKQGKPTLNFGGQNAELWCEGGEAAFIRRMANESQAFSSQVLWFTTLISKKDNVRPMRKQLEKLGVKAIRVVEMSQGQKISRFMAWSFMDKQQRKTWIELK.

2 disordered regions span residues 1–39 (MKNN…AAVK) and 262–281 (NQRK…GKPT). Basic residues predominate over residues 27–38 (AKPKRVKKKAAV).

This sequence belongs to the methyltransferase superfamily. METTL16/RlmF family.

The protein resides in the cytoplasm. The enzyme catalyses adenosine(1618) in 23S rRNA + S-adenosyl-L-methionine = N(6)-methyladenosine(1618) in 23S rRNA + S-adenosyl-L-homocysteine + H(+). Functionally, specifically methylates the adenine in position 1618 of 23S rRNA. This is Ribosomal RNA large subunit methyltransferase F from Vibrio parahaemolyticus serotype O3:K6 (strain RIMD 2210633).